Consider the following 272-residue polypeptide: Peptidoglycolipid exporter Gap (272 aa).

6 consecutive transmembrane segments (helical) span residues 5 to 25 (ILGLALFVSLNPLLLGFILLV), 36 to 56 (VVFWVGCLIVNVPGFLIPLFV), 79 to 99 (IEPFQLGTGIFALAVSAVIAL), 171 to 191 (LWVALVFGLAYIPPPPLVLLV), 206 to 226 (IIAVFVFIMAMLAVFEITLLS), and 252 to 272 (ILLVLFGAVGIWELIVGLGVI).

It belongs to the peptidoglycolipid addressing protein (GAP) (TC 2.A.116) family.

Its subcellular location is the cell inner membrane. Required for the transport of peptidoglycolipids (GPLs) to the cell surface. In Mycolicibacterium smegmatis (strain ATCC 700084 / mc(2)155) (Mycobacterium smegmatis), this protein is Peptidoglycolipid exporter Gap.